Reading from the N-terminus, the 819-residue chain is MRQMKYQFKFNPLAAAIFTLLCGGSMQSSYADANDSASSVDNKKLKESIQKAYPGQEFFEQYYVEKSSPEAQVRDTRSLSSAFCTGTWITPISPTTQAVPADQATSVVTADYAHYNPNGDSELEGNVLIDQQGRSIRANKVTIDRTQTYANAEGNVQLAQAGLLAQSDQINYNLKTQQGDLKNSFYISEQQHAHGHAEQIQRTSPTEIILRNATYTTCPPEQKPTWRLEAKEIKLNQDTGRGTTKNTKLYVKDVPILAVPYFNFPIDNRRTTGILNPNIGFSNDGGLELTVPVYLNLAPNYDATLTPRYISDRGVMLQSEFRYLTENFGQGKIWGGYLPDDKKYNNEDRKDFNLLHKWKINDYWSTDVEYHYASDKDYVTDLDTNPDSKTDLNLRRAWTLKYKNQIPGLTAQLKVEDFQTLDKTVSDVDKPYARLPQFLLNYVTGNPLGLQYEFNNDTAYFKKNIDDAANYSTQPSGTRIYNQFATRYNFRTPWAFAIPEVSIRSINTFYDQNTVENLGLNSDNKSKSVVVPQFSLDTGLIFQRDGDYLQTITPRAFYAYAPYKNQTGYPNFDTTSASINYDQLFSPYRFYGHDRLEDNNFLSLGVSYSLFDPQGLERLRAGVGQSFYFADRRVTLNNTDDTIDTSKNSGPIVSISSQLTNKFTVAANSAWMSNGDNAQHDFQTYYTGDHGNLYNLGYFNRKNIPDRQLAYDAAVASFVQPIMNNWRIMGHVQFDFRNNVAREYLLGVNYESCCYAISVYGRSYYNDLDDPKDPNVNVKRAVMAEITFKGLGGLNNKLASLLENRVLGFKEINQSWTQR.

A signal peptide spans 1–33 (MRQMKYQFKFNPLAAAIFTLLCGGSMQSSYADA).

This sequence belongs to the LptD family. As to quaternary structure, component of the lipopolysaccharide transport and assembly complex. Interacts with LptE and LptA.

The protein resides in the cell outer membrane. Functionally, together with LptE, is involved in the assembly of lipopolysaccharide (LPS) at the surface of the outer membrane. The polypeptide is LPS-assembly protein LptD (Acinetobacter baylyi (strain ATCC 33305 / BD413 / ADP1)).